The primary structure comprises 992 residues: ATP-dependent DNA helicase PIF7 (992 aa).

Residues 1-21 (MWDGPLRSRQNLRTVAKLRSS) constitute a mitochondrion transit peptide. 3 disordered regions span residues 20 to 43 (SSGC…GETA), 145 to 182 (TVNK…TAAS), and 190 to 209 (LDSS…AVTQ). Polar residues-rich tracts occupy residues 23–43 (CPLT…GETA), 173–182 (NVDNTTTAAS), and 191–208 (DSSS…QAVT). 237 to 244 (GGAGTGKS) serves as a coordination point for ATP. A DNA-binding region spans residues 651 to 670 (QAYVALSRCTDVANLVIENF).

The protein belongs to the helicase family. PIF1 subfamily. As to quaternary structure, monomer. Requires Mg(2+) as cofactor.

The protein resides in the mitochondrion matrix. The protein localises to the kinetoplast. The catalysed reaction is Couples ATP hydrolysis with the unwinding of duplex DNA at the replication fork by translocating in the 5'-3' direction. This creates two antiparallel DNA single strands (ssDNA). The leading ssDNA polymer is the template for DNA polymerase III holoenzyme which synthesizes a continuous strand.. The enzyme catalyses ATP + H2O = ADP + phosphate + H(+). Functionally, DNA-dependent ATPase and 5'-3' DNA helicase required for the maintenance of mitochondrial (kinetoplast) genome stability. The protein is ATP-dependent DNA helicase PIF7 of Trypanosoma brucei brucei (strain 927/4 GUTat10.1).